Consider the following 438-residue polypeptide: Sphingomyelinase phosphodiesterase D (438 aa).

The signal sequence occupies residues 1-17; sequence MKIILILVLVLVVSINA. Zn(2+)-binding residues include Asp-27 and His-29. Residue Asn-40 is glycosylated (N-linked (GlcNAc...) asparagine). Zn(2+) is bound by residues Asp-111 and Asn-148. A glycan (N-linked (GlcNAc...) asparagine) is linked at Asn-160. Zn(2+) is bound at residue His-247. A glycan (N-linked (GlcNAc...) asparagine) is linked at Asn-271. Positions 287 and 289 each coordinate Zn(2+). N-linked (GlcNAc...) asparagine glycans are attached at residues Asn-338 and Asn-359.

This sequence belongs to the acid sphingomyelinase family. Zn(2+) serves as cofactor.

The protein resides in the secreted. This chain is Sphingomyelinase phosphodiesterase D (sgmD), found in Dictyostelium discoideum (Social amoeba).